The chain runs to 69 residues: Cytochrome c oxidase subunit 8A, mitochondrial (69 aa).

The N-terminal 25 residues, 1 to 25 (MSVLTPLLLRGLTGPARRLPVPRAQ), are a transit peptide targeting the mitochondrion. Positions 2-19 (SVLTPLLLRGLTGPARRL) match the SIFI-degron motif. At 26-36 (IHSKPPREQLG) the chain is on the mitochondrial matrix side. A helical transmembrane segment spans residues 37-60 (TMDIAIGLTSCFLCFLLPSGWVLS). At 61–69 (HMENYKKRE) the chain is on the mitochondrial intermembrane side.

It belongs to the cytochrome c oxidase VIII family. In terms of assembly, component of the cytochrome c oxidase (complex IV, CIV), a multisubunit enzyme composed of 14 subunits. The complex is composed of a catalytic core of 3 subunits MT-CO1, MT-CO2 and MT-CO3, encoded in the mitochondrial DNA, and 11 supernumerary subunits COX4I1 (or COX4I2), COX5A, COX5B, COX6A2 (or COX6A1), COX6B1 (or COX6B2), COX6C, COX7A1 (or COX7A2), COX7B, COX7C, COX8B and NDUFA4, which are encoded in the nuclear genome. The complex exists as a monomer or a dimer and forms supercomplexes (SCs) in the inner mitochondrial membrane with NADH-ubiquinone oxidoreductase (complex I, CI) and ubiquinol-cytochrome c oxidoreductase (cytochrome b-c1 complex, complex III, CIII), resulting in different assemblies (supercomplex SCI(1)III(2)IV(1) and megacomplex MCI(2)III(2)IV(2)). Post-translationally, in response to mitochondrial stress, the precursor protein is ubiquitinated by the SIFI complex in the cytoplasm before mitochondrial import, leading to its degradation. Within the SIFI complex, UBR4 initiates ubiquitin chain that are further elongated or branched by KCMF1.

The protein localises to the mitochondrion inner membrane. It functions in the pathway energy metabolism; oxidative phosphorylation. Functionally, component of the cytochrome c oxidase, the last enzyme in the mitochondrial electron transport chain which drives oxidative phosphorylation. The respiratory chain contains 3 multisubunit complexes succinate dehydrogenase (complex II, CII), ubiquinol-cytochrome c oxidoreductase (cytochrome b-c1 complex, complex III, CIII) and cytochrome c oxidase (complex IV, CIV), that cooperate to transfer electrons derived from NADH and succinate to molecular oxygen, creating an electrochemical gradient over the inner membrane that drives transmembrane transport and the ATP synthase. Cytochrome c oxidase is the component of the respiratory chain that catalyzes the reduction of oxygen to water. Electrons originating from reduced cytochrome c in the intermembrane space (IMS) are transferred via the dinuclear copper A center (CU(A)) of subunit 2 and heme A of subunit 1 to the active site in subunit 1, a binuclear center (BNC) formed by heme A3 and copper B (CU(B)). The BNC reduces molecular oxygen to 2 water molecules using 4 electrons from cytochrome c in the IMS and 4 protons from the mitochondrial matrix. The polypeptide is Cytochrome c oxidase subunit 8A, mitochondrial (COX8A) (Bos taurus (Bovine)).